The following is a 424-amino-acid chain: Gamma-glutamyl phosphate reductase (424 aa).

This sequence belongs to the gamma-glutamyl phosphate reductase family.

It localises to the cytoplasm. It carries out the reaction L-glutamate 5-semialdehyde + phosphate + NADP(+) = L-glutamyl 5-phosphate + NADPH + H(+). It functions in the pathway amino-acid biosynthesis; L-proline biosynthesis; L-glutamate 5-semialdehyde from L-glutamate: step 2/2. In terms of biological role, catalyzes the NADPH-dependent reduction of L-glutamate 5-phosphate into L-glutamate 5-semialdehyde and phosphate. The product spontaneously undergoes cyclization to form 1-pyrroline-5-carboxylate. In Halorhodospira halophila (strain DSM 244 / SL1) (Ectothiorhodospira halophila (strain DSM 244 / SL1)), this protein is Gamma-glutamyl phosphate reductase.